A 410-amino-acid chain; its full sequence is Histone-lysine N-methyltransferase SUV39H2 (410 aa).

The region spanning 47 to 105 (YEVEYLCDYKVVKDMEYYLVKWKGWPDSTNTWEPLQNLKCPLLLQQFSNDKHNYLSQVK) is the Chromo domain. One can recognise a Pre-SET domain in the interval 189 to 247 (FGCSCTDCFFQKCCPAEAGVLLAYNKNQQIKIPPGTPIYECNSRCQCGPDCPNRIVQKG). Residues cysteine 191, cysteine 193, cysteine 196, cysteine 201, cysteine 202, cysteine 229, cysteine 233, cysteine 235, and cysteine 239 each coordinate Zn(2+). Residues 250–373 (YSLCIFRTSN…AGEELTFDYQ (124 aa)) enclose the SET domain. Residues 261–263 (RGW) and 330–331 (NH) contribute to the S-adenosyl-L-methionine site. Cysteine 333 provides a ligand contact to Zn(2+). Tyrosine 372 provides a ligand contact to S-adenosyl-L-methionine. Residues serine 381, serine 384, and serine 388 each carry the phosphoserine modification. Residues 394 to 410 (VRTVCKCGAVTCRGYLN) enclose the Post-SET domain. Cysteine 398 contacts Zn(2+). Residue lysine 399 coordinates S-adenosyl-L-methionine. 2 residues coordinate Zn(2+): cysteine 400 and cysteine 405.

The protein belongs to the class V-like SAM-binding methyltransferase superfamily. Histone-lysine methyltransferase family. Suvar3-9 subfamily. As to quaternary structure, interacts with SMAD5. The large PER complex involved in the histone methylation is composed of at least PER2, CBX3, TRIM28, SUV39H1 and/or SUV39H2; CBX3 mediates the formation of the complex. Ubiquitinated by the DCX(DCAF13) E3 ubiquitin ligase complex, leading to its degradation.

It is found in the nucleus. The protein localises to the chromosome. The protein resides in the centromere. The enzyme catalyses L-lysyl(9)-[histone H3] + 3 S-adenosyl-L-methionine = N(6),N(6),N(6)-trimethyl-L-lysyl(9)-[histone H3] + 3 S-adenosyl-L-homocysteine + 3 H(+). In terms of biological role, histone methyltransferase that specifically trimethylates 'Lys-9' of histone H3 using monomethylated H3 'Lys-9' as substrate. H3 'Lys-9' trimethylation represents a specific tag for epigenetic transcriptional repression by recruiting HP1 (CBX1, CBX3 and/or CBX5) proteins to methylated histones. Mainly functions in heterochromatin regions, thereby playing a central role in the establishment of constitutive heterochromatin at pericentric and telomere regions. H3 'Lys-9' trimethylation is also required to direct DNA methylation at pericentric repeats. SUV39H1 is targeted to histone H3 via its interaction with RB1 and is involved in many processes, such as cell cycle regulation, transcriptional repression and regulation of telomere length. May participate in regulation of higher-order chromatin organization during spermatogenesis. Recruited by the large PER complex to the E-box elements of the circadian target genes such as PER2 itself or PER1, contributes to the conversion of local chromatin to a heterochromatin-like repressive state through H3 'Lys-9' trimethylation. The chain is Histone-lysine N-methyltransferase SUV39H2 (SUV39H2) from Homo sapiens (Human).